We begin with the raw amino-acid sequence, 530 residues long: Cytochrome P450 2U1 (530 aa).

Transmembrane regions (helical) follow at residues 21–41 (VRAT…GWVW), 99–119 (VYGN…LSDF), 247–267 (ICLH…YLPF), and 328–348 (LFYI…NSLL). C476 is a heme binding site. The chain crosses the membrane as a helical span at residues 481-501 (LAKMELFLMFVSLMQTFTFAL).

The protein belongs to the cytochrome P450 family. Heme serves as cofactor. Widely expressed. Expressed in heart, brain and liver.

The protein resides in the endoplasmic reticulum membrane. It is found in the microsome membrane. Its subcellular location is the mitochondrion inner membrane. The enzyme catalyses an omega-methyl-long-chain fatty acid + reduced [NADPH--hemoprotein reductase] + O2 = an omega-hydroxy-long-chain fatty acid + oxidized [NADPH--hemoprotein reductase] + H2O + H(+). The catalysed reaction is (5Z,8Z,11Z,14Z)-eicosatetraenoate + reduced [NADPH--hemoprotein reductase] + O2 = 19-hydroxy-(5Z,8Z,11Z,14Z)-eicosatetraenoate + oxidized [NADPH--hemoprotein reductase] + H2O + H(+). It catalyses the reaction (5Z,8Z,11Z,14Z)-eicosatetraenoate + reduced [NADPH--hemoprotein reductase] + O2 = 20-hydroxy-(5Z,8Z,11Z,14Z)-eicosatetraenoate + oxidized [NADPH--hemoprotein reductase] + H2O + H(+). It carries out the reaction N-[(5Z,8Z,11Z,14Z)-eicosatetraenoyl]-serotonin + reduced [NADPH--hemoprotein reductase] + O2 = 2-oxo-N-[(5Z,8Z,11Z,14Z)-eicosatetraenoyl]-serotonin + oxidized [NADPH--hemoprotein reductase] + H2O + H(+). In terms of biological role, a cytochrome P450 monooxygenase involved in the metabolism of arachidonic acid and its conjugates. Mechanistically, uses molecular oxygen inserting one oxygen atom into a substrate, and reducing the second into a water molecule, with two electrons provided by NADPH via cytochrome P450 reductase (CPR; NADPH-ferrihemoprotein reductase). Acts as an omega and omega-1 hydroxylase for arachidonic acid and possibly for other long chain fatty acids. May modulate the arachidonic acid signaling pathway and play a role in other fatty acid signaling processes. May down-regulate the biological activities of N-arachidonoyl-serotonin, an endocannabinoid that has anti-nociceptive effects through inhibition of fatty acid amide hydrolase FAAH, TRPV1 receptor and T-type calcium channels. Catalyzes C-2 oxidation of the indole ring of N-arachidonoyl-serotonin forming a less active product 2-oxo-N-arachidonoyl-serotonin. This Mus musculus (Mouse) protein is Cytochrome P450 2U1.